The chain runs to 651 residues: E3 SUMO-protein ligase PIAS1 (651 aa).

N-acetylalanine is present on Ala2. Residues 2–200 are required for interaction with MSX1; it reads ADSAELKQMV…KCDFTVQVQL (199 aa). The region spanning 11-45 is the SAP domain; the sequence is VMSLRVSELQVLLGYAGRNKHGRKHELLTKALHLL. The LXXLL motif signature appears at 19–23; that stretch reads LQVLL. Glycyl lysine isopeptide (Lys-Gly) (interchain with G-Cter in SUMO2) cross-links involve residues Lys40 and Lys46. Positions 56 to 64 match the Nuclear localization signal motif; sequence KIKELYRRR. The PINIT domain occupies 124 to 288; it reads HLTSALHPVH…SMAVYLVKQL (165 aa). Glycyl lysine isopeptide (Lys-Gly) (interchain with G-Cter in SUMO2) cross-links involve residues Lys137 and Lys238. An SP-RING-type zinc finger spans residues 320-405; that stretch reads PDSEIATTSL…LKYCTDCDEI (86 aa). 4 residues coordinate Zn(2+): Cys351, His353, Cys374, and Cys377. Residues 368-380 carry the Nuclear localization signal motif; the sequence is KKPTWVCPVCDKK. Lys453 participates in a covalent cross-link: Glycyl lysine isopeptide (Lys-Gly) (interchain with G-Cter in SUMO2). An SUMO1-binding region spans residues 462–473; the sequence is LTIDSSSDEEEE. The segment at 465-511 is disordered; that stretch reads DSSSDEEEEEPPAKRTCPSLSPTSPLSNKGILSLPHQASPVSRTPSL. Ser467, Ser468, Ser483, and Ser485 each carry phosphoserine. The span at 482 to 491 shows a compositional bias: low complexity; sequence PSLSPTSPLS. Thr487 carries the phosphothreonine modification. Phosphoserine occurs at positions 488 and 491. Lys493 participates in a covalent cross-link: Glycyl lysine isopeptide (Lys-Gly) (interchain with G-Cter in SUMO2). Ser503, Ser510, and Ser522 each carry phosphoserine. 2 tandem repeats follow at residues 520-523 and 557-560. Residues 520 to 615 form a 4 X 4 AA repeats of N-T-S-L region; the sequence is NTSLIQDYRH…GSSSGSNSSL (96 aa). Residues 598 to 601 form a 3; approximate repeat; that stretch reads STSL. The tract at residues 600–630 is disordered; sequence SLPATNGSSSGSNSSLVSSNSLRESHGHGVA. Low complexity predominate over residues 605–621; that stretch reads NGSSSGSNSSLVSSNSL. The 4; approximate repeat unit spans residues 612–615; it reads NSSL.

It belongs to the PIAS family. Interacts with NR2C1; the interaction promotes its sumoylation. Interacts with DDX21, CSRP2, AXIN1, JUN, SATB2, PLAG1, TP53 and STAT1 (dimer), following IFNA1-stimulation. Interacts with SP3 (preferentially when SUMO-modified). Interacts with KLF8; the interaction results in SUMO ligation and repression of KLF8 transcriptional activity and of its cell cycle progression into G(1) phase. Interacts with CHUK/IKKA; this interaction induces PIAS1 phosphorylation. Interacts with PTK2/FAK1; the interaction promotes its sumoylation. Interacts with SUMO1, UBE2I, NCOA2 and AR. Interacts with NR2C1; the interaction promotes its sumoylation. Interacts with DDX5. Interacts with MTA1. Interacts with PML (isoform PML-12). Interacts with PRDM1. Interacts (via N-terminus) with MSX1 (via C-terminus); the interaction is required for the localization of both proteins to the nuclear periphery and specific binding of MSX1 to the core enhancer region in target gene promoters. In terms of processing, sumoylated. In terms of tissue distribution, expressed in kidney, heart, spleen, brain and cerebellum; weak expression, if any, in liver and lung.

It localises to the nucleus. The protein localises to the nucleus speckle. It is found in the PML body. The protein resides in the cytoplasm. Its subcellular location is the cytoskeleton. The enzyme catalyses S-ubiquitinyl-[E2 ubiquitin-conjugating enzyme]-L-cysteine + [acceptor protein]-L-lysine = [E2 ubiquitin-conjugating enzyme]-L-cysteine + N(6)-ubiquitinyl-[acceptor protein]-L-lysine.. It participates in protein modification; protein sumoylation. Functionally, functions as an E3-type small ubiquitin-like modifier (SUMO) ligase, stabilizing the interaction between UBE2I and the substrate, and as a SUMO-tethering factor. Catalyzes sumoylation of various proteins, such as CEBPB, MRE11, MTA1, PTK2 and PML. Plays a crucial role as a transcriptional coregulation in various cellular pathways, including the STAT pathway, the p53 pathway and the steroid hormone signaling pathway. In vitro, binds A/T-rich DNA. The effects of this transcriptional coregulation, transactivation or silencing, may vary depending upon the biological context. Mediates sumoylation of MRE11, stabilizing MRE11 on chromatin during end resection. Sumoylates PML (at 'Lys-65' and 'Lys-160') and PML-RAR and promotes their ubiquitin-mediated degradation. PIAS1-mediated sumoylation of PML promotes its interaction with CSNK2A1/CK2 which in turn promotes PML phosphorylation and degradation. Enhances the sumoylation of MTA1 and may participate in its paralog-selective sumoylation. Plays a dynamic role in adipogenesis by promoting the SUMOylation and degradation of CEBPB. Mediates the nuclear mobility and localization of MSX1 to the nuclear periphery, whereby MSX1 is brought into the proximity of target myoblast differentiation factor genes. Also required for the binding of MSX1 to the core enhancer region in target gene promoter regions, independent of its sumoylation activity. Capable of binding to the core enhancer region TAAT box in the MYOD1 gene promoter. In Mus musculus (Mouse), this protein is E3 SUMO-protein ligase PIAS1 (Pias1).